A 226-amino-acid polypeptide reads, in one-letter code: V-type proton ATPase subunit E 2 (226 aa).

The protein belongs to the V-ATPase E subunit family. As to quaternary structure, V-ATPase is a heteromultimeric enzyme made up of two complexes: the ATP-hydrolytic V1 complex and the proton translocation V0 complex. The V1 complex consists of three catalytic AB heterodimers that form a heterohexamer, three peripheral stalks each consisting of EG heterodimers, one central rotor including subunits D and F, and the regulatory subunits C and H. The proton translocation complex V0 consists of the proton transport subunit a, a ring of proteolipid subunits c9c'', rotary subunit d, subunits e and f, and the accessory subunits ATP6AP1/Ac45 and ATP6AP2/PRR.

Subunit of the V1 complex of vacuolar(H+)-ATPase (V-ATPase), a multisubunit enzyme composed of a peripheral complex (V1) that hydrolyzes ATP and a membrane integral complex (V0) that translocates protons. V-ATPase is responsible for acidifying and maintaining the pH of intracellular compartments and in some cell types, is targeted to the plasma membrane, where it is responsible for acidifying the extracellular environment. This Bos taurus (Bovine) protein is V-type proton ATPase subunit E 2 (ATP6V1E2).